The primary structure comprises 424 residues: Protein shisa-9 (424 aa).

The first 23 residues, 1–23 (MRRVLRLLLGCFLTELCARMCRA), serve as a signal peptide directing secretion. Topologically, residues 24–149 (QERSGHGQLA…DPLHDPTKDK (126 aa)) are extracellular. N45, N89, and N116 each carry an N-linked (GlcNAc...) asparagine glycan. The chain crosses the membrane as a helical span at residues 150-170 (TNLIVYIICGVVAVMVLVGIF). Residues 171–424 (TKLGLEKAHR…ITNSKTEVTV (254 aa)) are Cytoplasmic-facing. Disordered regions lie at residues 333 to 373 (PRAF…TWDP) and 389 to 424 (LGIA…EVTV). Composition is skewed to polar residues over residues 362-373 (YNSTANFKTWDP) and 402-424 (TRTQ…EVTV).

It belongs to the shisa family. SHISA9 subfamily. As to quaternary structure, component of some AMPA receptors (ionotropic glutamate receptors) complex, at least composed of some AMPA receptor (GRIA1, GRIA2 and/or GRIA3), CACNG2 and SHISA9, as well as low level of DLG4. As to expression, brain-specific. Mainly expressed in neurons, including in hippocampus, cerebral cortex, striatum, thalamus, olfactory bulb and cerebellum. Expressed in most brain structures during embryonic and postnatal development.

The protein localises to the cell projection. Its subcellular location is the dendritic spine membrane. It localises to the synapse. Its function is as follows. Regulator of short-term neuronal synaptic plasticity in the dentate gyrus. Associates with AMPA receptors (ionotropic glutamate receptors) in synaptic spines and promotes AMPA receptor desensitization at excitatory synapses. The polypeptide is Protein shisa-9 (Shisa9) (Mus musculus (Mouse)).